Reading from the N-terminus, the 185-residue chain is Elongation factor P (185 aa).

It belongs to the elongation factor P family.

Its subcellular location is the cytoplasm. It functions in the pathway protein biosynthesis; polypeptide chain elongation. Its function is as follows. Involved in peptide bond synthesis. Stimulates efficient translation and peptide-bond synthesis on native or reconstituted 70S ribosomes in vitro. Probably functions indirectly by altering the affinity of the ribosome for aminoacyl-tRNA, thus increasing their reactivity as acceptors for peptidyl transferase. This chain is Elongation factor P, found in Limosilactobacillus reuteri (strain DSM 20016) (Lactobacillus reuteri).